We begin with the raw amino-acid sequence, 225 residues long: Small ribosomal subunit protein uS3 (225 aa).

The 69-residue stretch at 38–106 (LRAFLRRKLS…DVALNIVEIR (69 aa)) folds into the KH type-2 domain.

Belongs to the universal ribosomal protein uS3 family. Part of the 30S ribosomal subunit. Forms a tight complex with proteins S10 and S14.

In terms of biological role, binds the lower part of the 30S subunit head. Binds mRNA in the 70S ribosome, positioning it for translation. This Gluconobacter oxydans (strain 621H) (Gluconobacter suboxydans) protein is Small ribosomal subunit protein uS3.